We begin with the raw amino-acid sequence, 120 residues long: Autophagy-related protein 8C (120 aa).

Positions 1-20 are disordered; the sequence is MARSSFKLEHPLERRQAEAN. The Phosphatidylethanolamine amidated glycine moiety is linked to residue G117. Positions 118–120 are cleaved as a propeptide — removed in mature form; sequence LFV.

The protein belongs to the ATG8 family. In terms of assembly, interacts with ATG4. The C-terminal 3 residues are removed by ATG4 to expose Gly-117 at the C-terminus. The C-terminal Gly is then amidated with phosphatidylethanolamine by an activating system similar to that for ubiquitin.

The protein resides in the cytoplasmic vesicle. It localises to the autophagosome membrane. It is found in the vacuole membrane. The protein localises to the cytoplasm. Its subcellular location is the cytoskeleton. Ubiquitin-like modifier involved in autophagosomes formation. May mediate the delivery of the autophagosomes to the vacuole via the microtubule cytoskeleton. The protein is Autophagy-related protein 8C (ATG8C) of Oryza sativa subsp. indica (Rice).